Reading from the N-terminus, the 406-residue chain is Inner kinetochore subunit OKP1 (406 aa).

Disordered stretches follow at residues 1–37 (MAADRDNFLQNIENDSINNGQAMDLSPNRSSSESDSS) and 59–122 (TQSK…TSGE). Polar residues predominate over residues 8–21 (FLQNIENDSINNGQ). A compositionally biased stretch (low complexity) spans 26–37 (SPNRSSSESDSS). Positions 69 to 78 (NSDDAEEGEI) are enriched in acidic residues. A Phosphoserine modification is found at Ser-70. Composition is skewed to basic and acidic residues over residues 79–89 (EERTNKEEGQY) and 97–106 (LRFEVGKEST). Residues 107 to 122 (GKLQSHLSDGSATSGE) are compositionally biased toward polar residues. Residues 239–285 (SKRQFIQNRYSQELQNNERLEAILSREQNLLEETRKLCMNLKTNNKK) are a coiled coil. Residues 317–340 (MHPDGPVTFRNDSHELNLMLNDPI) are CTF19-MCM21 binding motif. Positions 353-400 (VLSLLPSLKEYTKKSKELKETMGQMISDSHEEEIKEVFVPHHESHQDK) are interaction with NKP1-NKP2. The disordered stretch occupies residues 379 to 406 (SDSHEEEIKEVFVPHHESHQDKTEEDIH). Residues 380–406 (DSHEEEIKEVFVPHHESHQDKTEEDIH) show a composition bias toward basic and acidic residues.

It belongs to the CENP-Q/OKP1 family. As to quaternary structure, component of the heterotetrameric kinetochore subcomplex COMA, which consists of AME1, CTF19, MCM21 and OKP1. The COMA subcomplex is part of a larger constitutive centromere-associated network (CCAN) (also known as central kinetochore CTF19 complex in yeast), which is composed of at least AME1, CHL4, CNN1, CTF3, CTF19, IML3, MCM16, MCM21, MCM22, MHF1, MHF2, MIF2, NKP1, NKP2, OKP1 and WIP1. COMA binds the centromeric nucleosome-binding protein MIF2, and to the outer kinetochore MIND subcomplex. OKP1 interacts directly with AME1, with an NKP1-NKP2 dimer, and with CTF19-MCM21.

Its subcellular location is the nucleus. The protein localises to the chromosome. The protein resides in the centromere. It is found in the kinetochore. In terms of biological role, component of the kinetochore, a multiprotein complex that assembles on centromeric DNA and attaches chromosomes to spindle microtubules, mediating chromosome segregation and sister chromatid segregation during meiosis and mitosis. Component of the inner kinetochore COMA complex, which connects centromere-associated proteins and the outer kinetochore. COMA interacts with other inner kinetochore proteins to form the inner kinetochore constitutive centromere-associated network (CCAN), which serves as a structural platform for outer kinetochore assembly. The chain is Inner kinetochore subunit OKP1 from Saccharomyces cerevisiae (strain ATCC 204508 / S288c) (Baker's yeast).